Here is a 757-residue protein sequence, read N- to C-terminus: UDP-N-acetylmuramoyl-L-alanyl-D-glutamate--2,6-diaminopimelate ligase MurE homolog, chloroplastic (757 aa).

Over residues 1–11 (MATAPLAFHLP) the composition is skewed to low complexity. Residues 1 to 53 (MATAPLAFHLPFPFPSASRPPPRLLPPSRRPPAARLAATRRFRPPTADDEPPE) constitute a chloroplast transit peptide. Disordered regions lie at residues 1–112 (MATA…DEFF), 126–152 (FTRRGLIKPSAPAPSQPEEEDGLADEL), and 172–195 (VSLADEEDEEANGGGGGVDYGDDG). The segment covering 12-30 (FPFPSASRPPPRLLPPSRR) has biased composition (pro residues). Composition is skewed to acidic residues over residues 47 to 56 (ADDEPPEAAE) and 142 to 152 (PEEEDGLADEL).

It belongs to the MurCDEF family. MurE subfamily. Component of the plastid-encoded plastid RNA polymerase (PEP) complex.

It localises to the plastid. Its subcellular location is the chloroplast. In terms of biological role, required for the activity of the plastid-encoded RNA polymerase (PEP) and full expression of genes transcribed by PEP. The protein is UDP-N-acetylmuramoyl-L-alanyl-D-glutamate--2,6-diaminopimelate ligase MurE homolog, chloroplastic of Oryza sativa subsp. japonica (Rice).